The following is a 358-amino-acid chain: UDP-N-acetylglucosamine--N-acetylmuramyl-(pentapeptide) pyrophosphoryl-undecaprenol N-acetylglucosamine transferase (358 aa).

UDP-N-acetyl-alpha-D-glucosamine-binding positions include 10–12 (TGG), Asn-124, Ser-196, and Gln-293.

This sequence belongs to the glycosyltransferase 28 family. MurG subfamily.

The protein localises to the cell membrane. The catalysed reaction is di-trans,octa-cis-undecaprenyl diphospho-N-acetyl-alpha-D-muramoyl-L-alanyl-D-glutamyl-meso-2,6-diaminopimeloyl-D-alanyl-D-alanine + UDP-N-acetyl-alpha-D-glucosamine = di-trans,octa-cis-undecaprenyl diphospho-[N-acetyl-alpha-D-glucosaminyl-(1-&gt;4)]-N-acetyl-alpha-D-muramoyl-L-alanyl-D-glutamyl-meso-2,6-diaminopimeloyl-D-alanyl-D-alanine + UDP + H(+). Its pathway is cell wall biogenesis; peptidoglycan biosynthesis. In terms of biological role, cell wall formation. Catalyzes the transfer of a GlcNAc subunit on undecaprenyl-pyrophosphoryl-MurNAc-pentapeptide (lipid intermediate I) to form undecaprenyl-pyrophosphoryl-MurNAc-(pentapeptide)GlcNAc (lipid intermediate II). The protein is UDP-N-acetylglucosamine--N-acetylmuramyl-(pentapeptide) pyrophosphoryl-undecaprenol N-acetylglucosamine transferase of Exiguobacterium sp. (strain ATCC BAA-1283 / AT1b).